The sequence spans 134 residues: Peroxisomal testis-specific protein 1 (134 aa).

A Microbody targeting signal motif is present at residues 131 to 134; the sequence is NHLL.

The protein localises to the peroxisome. The protein is Peroxisomal testis-specific protein 1 (PXT1) of Homo sapiens (Human).